A 197-amino-acid chain; its full sequence is EF-hand calcium-binding domain-containing protein 9 (197 aa).

Ca(2+) is bound by residues Asp58 and Asp69. EF-hand domains follow at residues 59–94, 100–135, and 136–171; these read LKKA…LLAH, GQFM…FLFN, and IQKQ…YTDK. Positions 149, 153, 155, and 160 each coordinate Ca(2+). The segment covering 177–188 has biased composition (basic and acidic residues); the sequence is KTEEKEKGERKR. The interval 177–197 is disordered; it reads KTEEKEKGERKRSLYSKCHIK.

Component of the CatSper complex or CatSpermasome composed of the core pore-forming members CATSPER1, CATSPER2, CATSPER3 and CATSPER4 as well as auxiliary members CATSPERB, CATSPERG, CATSPERD, CATSPERE, CATSPERZ, C2CD6/CATSPERT, TMEM249, TMEM262 and EFCAB9. HSPA1 may be an additional auxiliary complex member. The core complex members CATSPER1, CATSPER2, CATSPER3 and CATSPER4 form a heterotetrameric channel. The auxiliary CATSPERB, CATSPERG, CATSPERD and CATSPERE subunits form a pavilion-like structure over the pore which stabilizes the complex through interactions with CATSPER4, CATSPER3, CATSPER1 and CATSPER2 respectively. TMEM262/CATSPERH interacts with CATSPERB, further stabilizing the complex. C2CD6/CATSPERT interacts at least with CATSPERD and is required for targeting the CatSper complex in the flagellar membrane. Interacts with CATSPERZ; the interaction is direct, Ca(2+)-dependent and connects EFCAB9 with the CatSper complex. Dissociates from CATSPERZ at elevated pH.

It is found in the cytoplasm. The protein resides in the cell projection. It localises to the cilium. The protein localises to the flagellum. In terms of biological role, auxiliary component of the CatSper complex, a complex involved in sperm cell hyperactivation. pH-dependent Ca(2+) sensor required to activate the CatSper channel. Sperm cell hyperactivation is needed for sperm motility which is essential late in the preparation of sperm for fertilization. Associates with the CatSper complex via direct interaction with CATSPERZ, and senses intracellular Ca(2+). Together with CATSPERZ, associates with the CatSper channel pore and is required for the two-row structure of each single CatSper channel. The protein is EF-hand calcium-binding domain-containing protein 9 of Homo sapiens (Human).